The following is a 524-amino-acid chain: Putative UDP-glucuronosyltransferase ugt-56 (524 aa).

Residues 1-20 form the signal peptide; sequence MLWAFIVWLGALCIYGSAFD. Asn125, Asn277, and Asn335 each carry an N-linked (GlcNAc...) asparagine glycan. Residues 488–508 traverse the membrane as a helical segment; that stretch reads LIDSSIALVFMLFIFVFVNHF.

It belongs to the UDP-glycosyltransferase family.

It localises to the membrane. It catalyses the reaction glucuronate acceptor + UDP-alpha-D-glucuronate = acceptor beta-D-glucuronoside + UDP + H(+). This chain is Putative UDP-glucuronosyltransferase ugt-56 (ugt-56), found in Caenorhabditis elegans.